A 123-amino-acid polypeptide reads, in one-letter code: Large ribosomal subunit protein uL29 (123 aa).

N6-acetyllysine is present on Lys-19. Lys-25 participates in a covalent cross-link: Glycyl lysine isopeptide (Lys-Gly) (interchain with G-Cter in SUMO2). Ser-29 is modified (phosphoserine). Lys-43 is modified (N6-acetyllysine). A disordered region spans residues 100-123 (EKLKTKKQQRKERLYPLRKYAVKA).

It belongs to the universal ribosomal protein uL29 family. As to quaternary structure, component of the large ribosomal subunit.

The protein localises to the cytoplasm. Component of the large ribosomal subunit. The ribosome is a large ribonucleoprotein complex responsible for the synthesis of proteins in the cell. This is Large ribosomal subunit protein uL29 (Rpl35) from Mus musculus (Mouse).